Here is a 478-residue protein sequence, read N- to C-terminus: MSQSLSSASSSGAPQRVRTRFAPSPTGFIHLGNIRSALYPWAFARATGGDFILRIEDTDVERSSQAAVDVILEGMQWLGMEPDEGPFYQMQRMDRYKEVLAQMQAQGLVYPCYMSVAELDALRERQMQAKQKPRYDGTWRPEEGKTLPPVPEGVQPVLRFRNPVGGSVVWEDKVKGRIEIQNDELDDLVIARPDGTPTYNFCVVVDDIDMAITHVIRGDDHVNNTPRQINIFRALGKEPPVYAHLPTVLNEQGEKMSKRNGAKPVTQYRDEGYLPEAMVNYLARLGWSHGDDEIFSREQFLEWFDLDHLGRSAAQFDEAKLRWVNAQHLKATADERLAELVAPRLAARGIAQSELADGRLPRICALFKDRCDTLVALADWAHVFYGEVTPNEEERAKHVVDAVKPAIAALSDALAQCAWDKASIAAAFKEVLAAQGLKMPQLAMPVRVLTVGTAHTPSVDAVLELLGREKIAARLRTA.

The short motif at 23–33 is the 'HIGH' region element; sequence PSPTGFIHLGN. Positions 130–145 are enriched in basic and acidic residues; that stretch reads KQKPRYDGTWRPEEGK. Residues 130-153 form a disordered region; the sequence is KQKPRYDGTWRPEEGKTLPPVPEG. The 'KMSKS' region motif lies at 255–259; the sequence is KMSKR. Lysine 258 is a binding site for ATP.

Belongs to the class-I aminoacyl-tRNA synthetase family. Glutamate--tRNA ligase type 1 subfamily. As to quaternary structure, monomer.

It localises to the cytoplasm. The catalysed reaction is tRNA(Glu) + L-glutamate + ATP = L-glutamyl-tRNA(Glu) + AMP + diphosphate. In terms of biological role, catalyzes the attachment of glutamate to tRNA(Glu) in a two-step reaction: glutamate is first activated by ATP to form Glu-AMP and then transferred to the acceptor end of tRNA(Glu). The sequence is that of Glutamate--tRNA ligase from Paracidovorax citrulli (strain AAC00-1) (Acidovorax citrulli).